Consider the following 276-residue polypeptide: NH(3)-dependent NAD(+) synthetase (276 aa).

39 to 46 (GLSGGVDS) lines the ATP pocket. Mg(2+) is bound at residue Asp45. Arg123 lines the deamido-NAD(+) pocket. Thr143 serves as a coordination point for ATP. Glu148 contacts Mg(2+). Positions 156 and 163 each coordinate deamido-NAD(+). ATP-binding residues include Lys172 and Ser194. Residue 254–255 (HK) participates in deamido-NAD(+) binding.

The protein belongs to the NAD synthetase family. As to quaternary structure, homodimer.

The enzyme catalyses deamido-NAD(+) + NH4(+) + ATP = AMP + diphosphate + NAD(+) + H(+). The protein operates within cofactor biosynthesis; NAD(+) biosynthesis; NAD(+) from deamido-NAD(+) (ammonia route): step 1/1. Functionally, catalyzes the ATP-dependent amidation of deamido-NAD to form NAD. Uses ammonia as a nitrogen source. The protein is NH(3)-dependent NAD(+) synthetase of Hyperthermus butylicus (strain DSM 5456 / JCM 9403 / PLM1-5).